A 92-amino-acid polypeptide reads, in one-letter code: UPF0223 protein SPy_1248/M5005_Spy0958 (92 aa).

Belongs to the UPF0223 family.

This is UPF0223 protein SPy_1248/M5005_Spy0958 from Streptococcus pyogenes serotype M1.